Consider the following 344-residue polypeptide: tRNA N6-adenosine threonylcarbamoyltransferase (344 aa).

The Fe cation site is built by H111 and H115. Substrate-binding positions include 134 to 138, D167, G180, and N277; that span reads LVSGG. Residue D305 coordinates Fe cation.

The protein belongs to the KAE1 / TsaD family. It depends on Fe(2+) as a cofactor.

It localises to the cytoplasm. The catalysed reaction is L-threonylcarbamoyladenylate + adenosine(37) in tRNA = N(6)-L-threonylcarbamoyladenosine(37) in tRNA + AMP + H(+). Functionally, required for the formation of a threonylcarbamoyl group on adenosine at position 37 (t(6)A37) in tRNAs that read codons beginning with adenine. Is involved in the transfer of the threonylcarbamoyl moiety of threonylcarbamoyl-AMP (TC-AMP) to the N6 group of A37, together with TsaE and TsaB. TsaD likely plays a direct catalytic role in this reaction. This Glaesserella parasuis serovar 5 (strain SH0165) (Haemophilus parasuis) protein is tRNA N6-adenosine threonylcarbamoyltransferase.